The primary structure comprises 154 residues: CASP-like protein 5C2 (154 aa).

Topologically, residues 1-17 are cytoplasmic; that stretch reads MEHVPGSFGTSASFALR. A helical membrane pass occupies residues 18-38; sequence FGQTIFSAASLIFMCFDFDFY. The Extracellular segment spans residues 39–41; that stretch reads DFT. The helical transmembrane segment at 42–62 threads the bilayer; that stretch reads TFCYLAMVMAIVTPWSILLAL. Over 63 to 81 the chain is Cytoplasmic; that stretch reads TDTYSVLVKLLPQELRVLS. A helical membrane pass occupies residues 82–102; that stretch reads IVFAGDFVLSFLSLGGACAVA. Residues 103 to 128 lie on the Extracellular side of the membrane; it reads SATELLASADGKICDGSLCIQYQVSA. The helical transmembrane segment at 129–149 threads the bilayer; that stretch reads ALAFLCWFLLLASALFNFWSL. At 150–154 the chain is on the cytoplasmic side; sequence PSLYY.

This sequence belongs to the Casparian strip membrane proteins (CASP) family. Homodimer and heterodimers.

The protein resides in the cell membrane. The polypeptide is CASP-like protein 5C2 (Arabidopsis thaliana (Mouse-ear cress)).